We begin with the raw amino-acid sequence, 257 residues long: Diphthine synthase (257 aa).

Residues leucine 9, aspartate 86, valine 89, 114-115 (SI), leucine 166, alanine 207, and histidine 232 each bind S-adenosyl-L-methionine.

Belongs to the diphthine synthase family. As to quaternary structure, homodimer.

It catalyses the reaction 2-[(3S)-amino-3-carboxypropyl]-L-histidyl-[translation elongation factor 2] + 3 S-adenosyl-L-methionine = diphthine-[translation elongation factor 2] + 3 S-adenosyl-L-homocysteine + 3 H(+). It participates in protein modification; peptidyl-diphthamide biosynthesis. Functionally, S-adenosyl-L-methionine-dependent methyltransferase that catalyzes the trimethylation of the amino group of the modified target histidine residue in translation elongation factor 2 (EF-2), to form an intermediate called diphthine. The three successive methylation reactions represent the second step of diphthamide biosynthesis. This is Diphthine synthase from Methanocella arvoryzae (strain DSM 22066 / NBRC 105507 / MRE50).